A 483-amino-acid polypeptide reads, in one-letter code: Nucleolar protein 4 (483 aa).

Disordered stretches follow at residues 210–418 (QQDE…PIPS) and 435–483 (SESR…DPQI). A compositionally biased stretch (acidic residues) spans 211-225 (QDEDESSIESDEFDM). Composition is skewed to polar residues over residues 229-254 (TRMS…TVHG), 262-271 (AESSNGNETL), and 302-317 (QPLN…QLTS). Basic and acidic residues-rich tracts occupy residues 319 to 330 (FRIDDQGSDGKN) and 340 to 350 (LKMEREARENG). Over residues 351 to 363 (SKSPAHSYSSYDS) the composition is skewed to polar residues. Basic and acidic residues-rich tracts occupy residues 364–374 (GKNESVDRGAE), 391–409 (HEDS…ERLK), and 435–451 (SESR…KAQD). Polar residues predominate over residues 467–483 (ATYSTATVPGSQEDPQI).

Its subcellular location is the nucleus. The protein localises to the nucleolus. The polypeptide is Nucleolar protein 4 (Nol4) (Mus musculus (Mouse)).